We begin with the raw amino-acid sequence, 445 residues long: Bifunctional protein GlmU (445 aa).

The segment at 1-218 (MRALVLAAGK…LLEITGVNTR (218 aa)) is pyrophosphorylase. UDP-N-acetyl-alpha-D-glucosamine contacts are provided by residues 6–9 (LAAG), lysine 20, glutamine 69, 74–75 (GT), 96–98 (YGD), glycine 134, glutamate 147, asparagine 162, and asparagine 216. Aspartate 98 is a Mg(2+) binding site. Mg(2+) is bound at residue asparagine 216. Residues 219–239 (KTLVWLEEQLRMRKIEELLEN) are linker. An N-acetyltransferase region spans residues 240 to 445 (GVTILDPATT…GWVLKKRKEE (206 aa)). Residues arginine 321 and lysine 339 each contribute to the UDP-N-acetyl-alpha-D-glucosamine site. Histidine 351 acts as the Proton acceptor in catalysis. 2 residues coordinate UDP-N-acetyl-alpha-D-glucosamine: tyrosine 354 and asparagine 365. Residues alanine 368, 374–375 (NY), serine 393, alanine 411, and arginine 428 contribute to the acetyl-CoA site.

The protein in the N-terminal section; belongs to the N-acetylglucosamine-1-phosphate uridyltransferase family. This sequence in the C-terminal section; belongs to the transferase hexapeptide repeat family. Homotrimer. Requires Mg(2+) as cofactor.

The protein localises to the cytoplasm. It carries out the reaction alpha-D-glucosamine 1-phosphate + acetyl-CoA = N-acetyl-alpha-D-glucosamine 1-phosphate + CoA + H(+). It catalyses the reaction N-acetyl-alpha-D-glucosamine 1-phosphate + UTP + H(+) = UDP-N-acetyl-alpha-D-glucosamine + diphosphate. The protein operates within nucleotide-sugar biosynthesis; UDP-N-acetyl-alpha-D-glucosamine biosynthesis; N-acetyl-alpha-D-glucosamine 1-phosphate from alpha-D-glucosamine 6-phosphate (route II): step 2/2. Its pathway is nucleotide-sugar biosynthesis; UDP-N-acetyl-alpha-D-glucosamine biosynthesis; UDP-N-acetyl-alpha-D-glucosamine from N-acetyl-alpha-D-glucosamine 1-phosphate: step 1/1. It functions in the pathway bacterial outer membrane biogenesis; LPS lipid A biosynthesis. Functionally, catalyzes the last two sequential reactions in the de novo biosynthetic pathway for UDP-N-acetylglucosamine (UDP-GlcNAc). The C-terminal domain catalyzes the transfer of acetyl group from acetyl coenzyme A to glucosamine-1-phosphate (GlcN-1-P) to produce N-acetylglucosamine-1-phosphate (GlcNAc-1-P), which is converted into UDP-GlcNAc by the transfer of uridine 5-monophosphate (from uridine 5-triphosphate), a reaction catalyzed by the N-terminal domain. This chain is Bifunctional protein GlmU, found in Thermotoga sp. (strain RQ2).